The primary structure comprises 243 residues: UPF0246 protein SUB1767 (243 aa).

Belongs to the UPF0246 family.

This is UPF0246 protein SUB1767 from Streptococcus uberis (strain ATCC BAA-854 / 0140J).